The sequence spans 396 residues: Cell adhesion molecule 3 (396 aa).

The N-terminal stretch at 1–22 is a signal peptide; the sequence is MGAPSALPLLLLLACSWAPGGA. In terms of domain architecture, Ig-like V-type spans 23-124; it reads NLSQDDSQPW…VRTAKSLVTV (102 aa). Residues 23 to 328 lie on the Extracellular side of the membrane; the sequence is NLSQDDSQPW…PVPSSSSTYH (306 aa). Cystine bridges form between Cys-48–Cys-108, Cys-150–Cys-207, and Cys-252–Cys-297. Ig-like C2-type domains lie at 128-226 and 231-313; these read PQKP…QRIE and PTAM…FTLN. The N-linked (GlcNAc...) asparagine glycan is linked to Asn-288. The chain crosses the membrane as a helical span at residues 329–349; it reads AIIGGIVAFIVFLLLILLIFL. Residues 350 to 396 lie on the Cytoplasmic side of the membrane; sequence GHYLIRHKGTYLTHEAKGSDDAPDADTAIINAEGGQSGGDDKKEYFI. Residues 365 to 396 form a disordered region; that stretch reads AKGSDDAPDADTAIINAEGGQSGGDDKKEYFI. A Phosphoserine modification is found at Ser-386.

The protein belongs to the nectin family. As to quaternary structure, homodimer. Can form trans-heterodimers with NECTIN3. Interacts with EPB41L1, DLG3, PALS2 and CASK.

The protein resides in the cell membrane. It is found in the cell junction. Involved in cell-cell adhesion. Has both calcium-independent homophilic cell-cell adhesion activity and calcium-independent heterophilic cell-cell adhesion activity with IGSF4, NECTIN1 and NECTIN3. Interaction with EPB41L1 may regulate structure or function of cell-cell junctions. This chain is Cell adhesion molecule 3 (Cadm3), found in Rattus norvegicus (Rat).